The primary structure comprises 529 residues: Phospholipase A1-Igamma2, chloroplastic (529 aa).

A chloroplast-targeting transit peptide spans 1–43; that stretch reads MAAIPSHNNLLTINHKNSITGSSSLNTNFSEINFPAKFRVATR. The GXSXG motif lies at 316–320; sequence GHSLG. The active-site Acyl-ester intermediate is Ser318. Residues Asp381 and His437 each act as charge relay system in the active site.

Belongs to the AB hydrolase superfamily. Lipase family. In terms of assembly, interacts with SBP1. In terms of tissue distribution, widely expressed. Highly expressed in leaves and stems.

It is found in the plastid. The protein resides in the chloroplast. It carries out the reaction 1,2-dihexadecanoyl-sn-glycero-3-phosphocholine + H2O = 2-hexadecanoyl-sn-glycero-3-phosphocholine + hexadecanoate + H(+). It catalyses the reaction a 1,2-diacyl-3-O-(beta-D-galactosyl)-sn-glycerol + H2O = an acyl-3-O-(beta-D-galactosyl)-sn-glycerol + a fatty acid + H(+). The enzyme catalyses a 1,2-diacyl-3-O-[alpha-D-galactosyl-(1-&gt;6)-beta-D-galactosyl]-sn-glycerol + H2O = acyl-3-O-[alpha-D-galactosyl-(1-&gt;6)-beta-D-galactosyl]-sn-glycerol + a fatty acid + H(+). The catalysed reaction is a triacylglycerol + H2O = a diacylglycerol + a fatty acid + H(+). Its function is as follows. Acylhydrolase with broad specificity. Catalyzes the hydrolysis of phosphatidylcholine at the sn-1 position. Possesses moderate activity toward phosphatidylcholine (PC), monogalactosyldiacylglycerol (MGDG), digalactosyldiacylglycerol (DGDG) and triacylglycerol (TAG). This chain is Phospholipase A1-Igamma2, chloroplastic, found in Arabidopsis thaliana (Mouse-ear cress).